Consider the following 427-residue polypeptide: Glutamate-1-semialdehyde 2,1-aminomutase (427 aa).

At Lys265 the chain carries N6-(pyridoxal phosphate)lysine.

The protein belongs to the class-III pyridoxal-phosphate-dependent aminotransferase family. HemL subfamily. In terms of assembly, homodimer. Pyridoxal 5'-phosphate serves as cofactor.

It is found in the cytoplasm. The enzyme catalyses (S)-4-amino-5-oxopentanoate = 5-aminolevulinate. It participates in porphyrin-containing compound metabolism; protoporphyrin-IX biosynthesis; 5-aminolevulinate from L-glutamyl-tRNA(Glu): step 2/2. The sequence is that of Glutamate-1-semialdehyde 2,1-aminomutase from Bordetella pertussis (strain Tohama I / ATCC BAA-589 / NCTC 13251).